Consider the following 372-residue polypeptide: Alpha-1,3-mannosyl-glycoprotein 4-beta-N-acetylglucosaminyltransferase-like protein MGAT4D (372 aa).

At 1 to 8 the chain is on the cytoplasmic side; the sequence is MKTKNVNL. Residues 9 to 29 traverse the membrane as a helical; Signal-anchor for type II membrane protein segment; the sequence is LFALVAVLLFGFSCFCISRMN. Residues 30-372 lie on the Lumenal side of the membrane; that stretch reads QTNNQLINCR…REQHLKDHYY (343 aa). Residues asparagine 54 and asparagine 143 are each glycosylated (N-linked (GlcNAc...) asparagine).

The protein belongs to the glycosyltransferase 54 family. May self-associate; specifically in the endoplasmic reticulum prior to its translocation to the Golgi. Interacts with MGAT1, MGAT3 and MAN2A2; may interact with MGTA1 specifically in the Golgi. N-glycosylated. O-glycosylated; further modified with terminal sialic acid residues. Testis.

Its subcellular location is the golgi apparatus membrane. It is found in the endoplasmic reticulum membrane. May play a role in male spermatogenesis. In vitro acts as inhibitor of MGAT1 activity causing cell surface proteins to carry mainly high mannose N-glycans. The function is mediated by its lumenal domain and occurs specifically in the Golgi. A catalytic glucosyltransferase activity is not detected. May be involved in regulation of Sertoli-germ cell interactions during specific stages of spermatogenesis. The protein is Alpha-1,3-mannosyl-glycoprotein 4-beta-N-acetylglucosaminyltransferase-like protein MGAT4D of Rattus norvegicus (Rat).